A 1264-amino-acid chain; its full sequence is ATP-dependent helicase/nuclease subunit A (1264 aa).

Residues 12–482 (EQFTDSQWQA…IILAENFRSR (471 aa)) form the UvrD-like helicase ATP-binding domain. ATP is bound at residue 33 to 40 (ASAGSGKT). The UvrD-like helicase C-terminal domain occupies 520-808 (SEAADYSTEL…RVMTIHASKG (289 aa)).

It belongs to the helicase family. AddA subfamily. As to quaternary structure, heterodimer of AddA and AddB/RexB. It depends on Mg(2+) as a cofactor.

It carries out the reaction Couples ATP hydrolysis with the unwinding of duplex DNA by translocating in the 3'-5' direction.. It catalyses the reaction ATP + H2O = ADP + phosphate + H(+). Functionally, the heterodimer acts as both an ATP-dependent DNA helicase and an ATP-dependent, dual-direction single-stranded exonuclease. Recognizes the chi site generating a DNA molecule suitable for the initiation of homologous recombination. The AddA nuclease domain is required for chi fragment generation; this subunit has the helicase and 3' -&gt; 5' nuclease activities. The polypeptide is ATP-dependent helicase/nuclease subunit A (Enterococcus faecalis (strain ATCC 700802 / V583)).